The chain runs to 67 residues: Protein AaeX (67 aa).

2 helical membrane-spanning segments follow: residues 3–23 and 43–63; these read LFPV…ELLL and FVWH…YLIS.

The protein belongs to the AaeX family.

It is found in the cell membrane. This Escherichia coli O1:K1 / APEC protein is Protein AaeX.